The sequence spans 472 residues: UDP-glycosyltransferase 2 (472 aa).

UDP-alpha-D-glucose contacts are provided by residues Ser-283, Trp-348–Ala-349, His-366–Glu-374, and Tyr-388–Gln-391.

Belongs to the UDP-glycosyltransferase family. As to expression, highly expressed in roots. Expressed in leaves and stems.

Its function is as follows. Glycosyltransferase that possesses isoflavonoids 4'-O- and 7-O-glucosyltransferase activities. Shows a successive glucosylation toward the acceptors producing their corresponding 4',7-O-diglucosides. Can use genistein, formononetin, daidzein, liquiritigenin and naringenin as substrates. Also shows a 3'-O-glucosylation activity in vitro. The polypeptide is UDP-glycosyltransferase 2 (Pueraria montana var. lobata (Kudzu vine)).